A 2037-amino-acid polypeptide reads, in one-letter code: Fatty acid synthase subunit beta (2037 aa).

Positions 1 to 453 (MSTHRPFQLT…VYDTFDGSDF (453 aa)) are acetyltransferase. The For acetyltransferase activity role is filled by serine 261. The enoyl reductase stretch occupies residues 465–798 (VKLITELPVH…GSRVMTSKES (334 aa)). The segment at 1132–1612 (GTELNWLQAF…LPNDTLQTTM (481 aa)) is dehydratase. The MaoC-like domain occupies 1506–1634 (NGKTIEESVI…KVETRNVETE (129 aa)). A malonyl/palmitoyl transferase region spans residues 1613 to 1833 (EHVGMINGRK…MTMQVAVPRD (221 aa)). Serine 1796 (for malonyltransferase activity) is an active-site residue.

The protein belongs to the fungal fatty acid synthetase subunit beta family. As to quaternary structure, [Alpha(6)beta(6)] hexamers of two multifunctional subunits (alpha and beta).

It carries out the reaction acetyl-CoA + n malonyl-CoA + 2n NADPH + 4n H(+) = a long-chain-acyl-CoA + n CoA + n CO2 + 2n NADP(+).. The enzyme catalyses holo-[ACP] + acetyl-CoA = acetyl-[ACP] + CoA. The catalysed reaction is holo-[ACP] + malonyl-CoA = malonyl-[ACP] + CoA. It catalyses the reaction a (3R)-hydroxyacyl-[ACP] = a (2E)-enoyl-[ACP] + H2O. It carries out the reaction a 2,3-saturated acyl-[ACP] + NAD(+) = a (2E)-enoyl-[ACP] + NADH + H(+). The enzyme catalyses (9Z)-octadecenoyl-[ACP] + H2O = (9Z)-octadecenoate + holo-[ACP] + H(+). Functionally, fatty acid synthetase catalyzes the formation of long-chain fatty acids from acetyl-CoA, malonyl-CoA and NADPH. The beta subunit contains domains for: [acyl-carrier-protein] acetyltransferase and malonyltransferase, S-acyl fatty acid synthase thioesterase, enoyl-[acyl-carrier-protein] reductase, and 3-hydroxypalmitoyl-[acyl-carrier-protein] dehydratase. The sequence is that of Fatty acid synthase subunit beta (FAS1) from Candida albicans (Yeast).